Consider the following 119-residue polypeptide: Large ribosomal subunit protein uL24 (119 aa).

Belongs to the universal ribosomal protein uL24 family. Part of the 50S ribosomal subunit.

In terms of biological role, one of two assembly initiator proteins, it binds directly to the 5'-end of the 23S rRNA, where it nucleates assembly of the 50S subunit. Functionally, one of the proteins that surrounds the polypeptide exit tunnel on the outside of the subunit. This chain is Large ribosomal subunit protein uL24, found in Leptospira interrogans serogroup Icterohaemorrhagiae serovar copenhageni (strain Fiocruz L1-130).